Consider the following 338-residue polypeptide: Replication factor C subunit 3 (338 aa).

57–64 (GPPGTGKT) serves as a coordination point for ATP.

Belongs to the activator 1 small subunits family. Heteropentamer of subunits RFC1, RFC2, RFC3, RFC4 and RFC5 that forms a complex with PCNA in the presence of ATP.

The protein resides in the nucleus. The elongation of primed DNA templates by DNA polymerase delta and epsilon requires the action of the accessory proteins proliferating cell nuclear antigen (PCNA) and activator 1. Subunit 3 binds ATP. The polypeptide is Replication factor C subunit 3 (RFC3) (Blastobotrys adeninivorans (Yeast)).